Reading from the N-terminus, the 479-residue chain is GTPase Obg (479 aa).

The 158-residue stretch at 2 to 159 (TTFVDRVELH…QDIVLELKTV (158 aa)) folds into the Obg domain. Residues 61–87 (HHKPHRSATNGKPGEGGNRSGKDGQDL) are disordered. The OBG-type G domain maps to 160–331 (ADVALVGYPS…LSFALAELVG (172 aa)). GTP contacts are provided by residues 166-173 (GYPSAGKS), 191-195 (FTTLV), 212-215 (DVPG), 283-286 (NKID), and 312-314 (SAV). Mg(2+) is bound by residues Ser173 and Thr193. Residues 349 to 431 (PKAVDDAGFT…DNAVVFDWEP (83 aa)) enclose the OCT domain. Residues 440–453 (LGRRGEDHRLDEPR) show a composition bias toward basic and acidic residues. Residues 440 to 479 (LGRRGEDHRLDEPRPAAQRRRDKQAERDDAEKEYDDFEPF) form a disordered region. Residues 470-479 (EKEYDDFEPF) are compositionally biased toward acidic residues.

Belongs to the TRAFAC class OBG-HflX-like GTPase superfamily. OBG GTPase family. Monomer. Requires Mg(2+) as cofactor.

It is found in the cytoplasm. Its function is as follows. An essential GTPase which binds GTP, GDP and possibly (p)ppGpp with moderate affinity, with high nucleotide exchange rates and a fairly low GTP hydrolysis rate. Plays a role in control of the cell cycle, stress response, ribosome biogenesis and in those bacteria that undergo differentiation, in morphogenesis control. The chain is GTPase Obg from Streptomyces avermitilis (strain ATCC 31267 / DSM 46492 / JCM 5070 / NBRC 14893 / NCIMB 12804 / NRRL 8165 / MA-4680).